Reading from the N-terminus, the 75-residue chain is Small ribosomal subunit protein bS18 (75 aa).

It belongs to the bacterial ribosomal protein bS18 family. Part of the 30S ribosomal subunit. Forms a tight heterodimer with protein bS6.

Functionally, binds as a heterodimer with protein bS6 to the central domain of the 16S rRNA, where it helps stabilize the platform of the 30S subunit. The chain is Small ribosomal subunit protein bS18 from Yersinia enterocolitica serotype O:8 / biotype 1B (strain NCTC 13174 / 8081).